The chain runs to 139 residues: ATP synthase epsilon chain (139 aa).

The tract at residues 89-110 (EARAEQARAEAEARRREAQSER) is disordered.

Belongs to the ATPase epsilon chain family. As to quaternary structure, F-type ATPases have 2 components, CF(1) - the catalytic core - and CF(0) - the membrane proton channel. CF(1) has five subunits: alpha(3), beta(3), gamma(1), delta(1), epsilon(1). CF(0) has three main subunits: a, b and c.

The protein resides in the cell membrane. Produces ATP from ADP in the presence of a proton gradient across the membrane. This is ATP synthase epsilon chain from Chloroflexus aurantiacus (strain ATCC 29366 / DSM 635 / J-10-fl).